The following is an 82-amino-acid chain: U7-hexatoxin-Mg1a (82 aa).

The first 26 residues, 1 to 26, serve as a signal peptide directing secretion; the sequence is MRTIVFLIVSILLLSSAVLMLAEGNA. The propeptide occupies 27–44; that stretch reads ASHELQEYPIEESLEEQR. Disulfide bonds link Cys46-Cys62, Cys51-Cys67, Cys61-Cys77, and Cys69-Cys75. Residue Arg80 is modified to Arginine amide.

This sequence belongs to the rTX family. As to expression, expressed by the venom gland.

Its subcellular location is the secreted. Functionally, induces flaccid paralysis when injected into lepidopteran larvae. Intracranial injection into mice causes awkwardness of movement and laboured respiration until death. This is U7-hexatoxin-Mg1a from Macrothele gigas (Japanese funnel web spider).